Here is a 103-residue protein sequence, read N- to C-terminus: N(4)-acetylcytidine amidohydrolase (103 aa).

The region spanning 6–100 (ITFFQRFQED…AEDRFYVIEF (95 aa)) is the ASCH domain. The active-site Proton acceptor is the Lys21. Thr24 (nucleophile) is an active-site residue. Glu74 acts as the Proton donor in catalysis.

It belongs to the N(4)-acetylcytidine amidohydrolase family.

It catalyses the reaction N(4)-acetylcytidine + H2O = cytidine + acetate + H(+). The enzyme catalyses N(4)-acetyl-2'-deoxycytidine + H2O = 2'-deoxycytidine + acetate + H(+). It carries out the reaction N(4)-acetylcytosine + H2O = cytosine + acetate + H(+). Its function is as follows. Catalyzes the hydrolysis of N(4)-acetylcytidine (ac4C). This Klebsiella pneumoniae (strain 342) protein is N(4)-acetylcytidine amidohydrolase.